Reading from the N-terminus, the 380-residue chain is Homoserine O-succinyltransferase (380 aa).

One can recognise an AB hydrolase-1 domain in the interval 51–362 (NAVLICHALS…SKHGHDAFLL (312 aa)). Residue Ser157 is the Nucleophile of the active site. Arg227 lines the substrate pocket. Catalysis depends on residues Asp324 and His357. Residue Asp358 coordinates substrate.

The protein belongs to the AB hydrolase superfamily. MetX family. As to quaternary structure, homodimer.

Its subcellular location is the cytoplasm. The enzyme catalyses L-homoserine + succinyl-CoA = O-succinyl-L-homoserine + CoA. Its pathway is amino-acid biosynthesis; L-methionine biosynthesis via de novo pathway; O-succinyl-L-homoserine from L-homoserine: step 1/1. Transfers a succinyl group from succinyl-CoA to L-homoserine, forming succinyl-L-homoserine. This Cellvibrio japonicus (strain Ueda107) (Pseudomonas fluorescens subsp. cellulosa) protein is Homoserine O-succinyltransferase.